The following is a 210-amino-acid chain: T-cell surface glycoprotein CD8 beta-2 chain (210 aa).

Residues Met-1–Gly-18 form the signal peptide. The Ig-like V-type domain occupies Asn-19 to Leu-132. The Extracellular portion of the chain corresponds to Asn-19 to Pro-170. Residues Cys-41 and Cys-116 are joined by a disulfide bond. The N-linked (GlcNAc...) asparagine glycan is linked to Asn-102. The chain crosses the membrane as a helical span at residues Val-171–Met-191. Over His-192 to Lys-210 the chain is Cytoplasmic.

In general heterodimer of an alpha and a beta chain linked by two disulfide bonds.

Its subcellular location is the cell membrane. Identifies cytotoxic/suppressor T-cells that interact with MHC class I bearing targets. CD8 is thought to play a role in the process of T-cell mediated killing. This Homo sapiens (Human) protein is T-cell surface glycoprotein CD8 beta-2 chain.